The following is a 708-amino-acid chain: Polyribonucleotide nucleotidyltransferase (708 aa).

The Mg(2+) site is built by Asp-485 and Asp-491. A KH domain is found at 552 to 611; the sequence is PKTYIMSIPPDKIRDVIGSGGKVINKIIAETGVKIDIKEDGKIFVMSEDSEGAKKALKII. In terms of domain architecture, S1 motif spans 621–689; that stretch reads GEIYLGKVTK…NQGRINLSRK (69 aa). A disordered region spans residues 689–708; that stretch reads KDAIKDSEKKEQNEKDVQKK.

Belongs to the polyribonucleotide nucleotidyltransferase family. It depends on Mg(2+) as a cofactor.

It localises to the cytoplasm. The enzyme catalyses RNA(n+1) + phosphate = RNA(n) + a ribonucleoside 5'-diphosphate. Its function is as follows. Involved in mRNA degradation. Catalyzes the phosphorolysis of single-stranded polyribonucleotides processively in the 3'- to 5'-direction. In Clostridium kluyveri (strain NBRC 12016), this protein is Polyribonucleotide nucleotidyltransferase.